A 477-amino-acid polypeptide reads, in one-letter code: MGIKVYNTLTRKKEELKPLRDGEVRMYVCGPTVYDYPHLGHARTYIAFDVIRRYLEHRGFTVLMVMNFTDIDDKIIKRAQETGEDPGKLAERFIKVFLEDMNALKVKPADIYPRVTEHIDDIIEFIKKLKEKGYAYEGSDGVYFEVQKFKDYGKLSGVKIEELRKGARVEPGEGKKNPEDFALWKKAKPGEPKWDSPWGEGRPGWHIECSVMSSKYLGESFDIHGGGNDLIFPHHENEIAQSEACFGHEWVRYWLHTGFVMVKGEKMSKSLGNFVTVRELLQRYSPEVIRLFVLQKHYRSPLDYTEEGLQHAKNNLERLYNTLENIRIAMRNAELSYKWSEKDFEAYEAIREARKKFYDAMDDDFNTAEALKAVFEVSNAINKYILEVDKPKESILRKALEFFKVVSEVFGIFEDYFKEEKKGEEEKLIELLVEVRKQLRKEKRFDLADKIREELRKLGIQLEDKGQETVWKRVKVS.

Residue Cys29 coordinates Zn(2+). The 'HIGH' region motif lies at 31 to 41 (PTVYDYPHLGH). Residues Cys209, His234, and Glu238 each coordinate Zn(2+). The 'KMSKS' region motif lies at 266–270 (KMSKS). Residue Lys269 participates in ATP binding.

It belongs to the class-I aminoacyl-tRNA synthetase family. Requires Zn(2+) as cofactor.

Its subcellular location is the cytoplasm. It carries out the reaction tRNA(Cys) + L-cysteine + ATP = L-cysteinyl-tRNA(Cys) + AMP + diphosphate. This Pyrococcus abyssi (strain GE5 / Orsay) protein is Cysteine--tRNA ligase (cysS).